A 422-amino-acid chain; its full sequence is Anhydromevalonate phosphate decarboxylase (422 aa).

Mn(2+)-binding residues include asparagine 134 and glutamate 197. Residue aspartate 244 is the Proton acceptor of the active site.

It belongs to the UbiD family. Prenylated FMN is required as a cofactor. Mn(2+) serves as cofactor.

It carries out the reaction (2E)-3-methyl-5-phosphooxypent-2-enoate + H(+) = isopentenyl phosphate + CO2. The protein operates within isoprenoid biosynthesis; isopentenyl diphosphate biosynthesis via mevalonate pathway. Functionally, catalyzes the conversion of trans-anhydromevalonate 5-phosphate (tAHMP) into isopentenyl phosphate. Involved in the archaeal mevalonate (MVA) pathway, which provides fundamental precursors for isoprenoid biosynthesis, such as isopentenyl diphosphate (IPP) and dimethylallyl diphosphate (DMAPP). The sequence is that of Anhydromevalonate phosphate decarboxylase from Methanosarcina mazei (strain ATCC BAA-159 / DSM 3647 / Goe1 / Go1 / JCM 11833 / OCM 88) (Methanosarcina frisia).